A 106-amino-acid polypeptide reads, in one-letter code: UPF0213 protein KPN78578_35340 (106 aa).

Positions 13–88 constitute a GIY-YIG domain; that stretch reads VCWFLYLIRT…KQLTKREKER (76 aa).

It belongs to the UPF0213 family.

The protein is UPF0213 protein KPN78578_35340 of Klebsiella pneumoniae subsp. pneumoniae (strain ATCC 700721 / MGH 78578).